The chain runs to 218 residues: Cytochrome b6 (218 aa).

A helical transmembrane segment spans residues 35–55 (IFYCLGGITLVCFLIQFATGF). Cysteine 38 is a heme c binding site. Heme b is bound by residues histidine 89 and histidine 103. 3 helical membrane-spanning segments follow: residues 93-113 (ASMM…TGGF), 119-139 (LTWI…VTGY), and 189-209 (LHTF…FLMI). Positions 190 and 205 each coordinate heme b.

This sequence belongs to the cytochrome b family. PetB subfamily. As to quaternary structure, the 4 large subunits of the cytochrome b6-f complex are cytochrome b6, subunit IV (17 kDa polypeptide, PetD), cytochrome f and the Rieske protein, while the 4 small subunits are PetG, PetL, PetM and PetN. The complex functions as a dimer. Heme b is required as a cofactor. Requires heme c as cofactor.

It is found in the cellular thylakoid membrane. Component of the cytochrome b6-f complex, which mediates electron transfer between photosystem II (PSII) and photosystem I (PSI), cyclic electron flow around PSI, and state transitions. This is Cytochrome b6 from Prochlorococcus marinus (strain NATL1A).